A 181-amino-acid chain; its full sequence is Keratin-associated protein 4-5 (181 aa).

A run of 26 repeats spans residues 5 to 9 (CCGSV), 20 to 24 (CCRPS), 25 to 29 (CCQTT), 30 to 34 (CCRTT), 35 to 39 (CCRPS), 40 to 44 (CCKPQ), 45 to 49 (CCQSV), 55 to 59 (CCHPS), 60 to 64 (CCISS), 65 to 69 (CCRPY), 70 to 74 (CCESS), 75 to 79 (CCRPC), 80 to 84 (CCQTT), 85 to 89 (CCRTT), 90 to 94 (CCRTT), 95 to 99 (CCCPS), 100 to 104 (CCVSS), 105 to 109 (CCRPQ), 110 to 114 (CCQSV), 115 to 119 (CCQPT), 120 to 124 (CCRPS), 125 to 129 (CCISS), 130 to 134 (CCHPS), 135 to 139 (CCESS), 140 to 144 (CCRPC), and 145 to 149 (CCVRP). The segment at 5-154 (CCGSVSSEQS…CCVRPVCGRV (150 aa)) is 26 X 5 AA repeats of C-C-[GRQVCHIEK]-[SPTR]-[VSTQYC].

The protein belongs to the KRTAP type 4 family. Interacts with hair keratins. Expressed in the hair follicles.

In terms of biological role, in the hair cortex, hair keratin intermediate filaments are embedded in an interfilamentous matrix, consisting of hair keratin-associated proteins (KRTAP), which are essential for the formation of a rigid and resistant hair shaft through their extensive disulfide bond cross-linking with abundant cysteine residues of hair keratins. The matrix proteins include the high-sulfur and high-glycine-tyrosine keratins. This chain is Keratin-associated protein 4-5 (KRTAP4-5), found in Homo sapiens (Human).